A 73-amino-acid polypeptide reads, in one-letter code: MNDLALALGLGIPLSLLVGVIIGYFISIKIFKKQIRDNPPITENQIKAMYAKMGRKLSETQVKEIMRSIKNQK.

Residues 6–26 form a helical membrane-spanning segment; that stretch reads LALGLGIPLSLLVGVIIGYFI.

This sequence belongs to the UPF0154 family.

Its subcellular location is the membrane. The polypeptide is UPF0154 protein MG335.1 homolog (Mycoplasma pneumoniae (strain ATCC 29342 / M129 / Subtype 1) (Mycoplasmoides pneumoniae)).